The chain runs to 103 residues: MHESLRNWKLSPRYFGIAGDVIAEGTGLGKALNIPGKYILKPFPLLRLLSVTLFISSLVLLANPTGTLNIFSYSYVVMVVLFICAKSLFNYSLQFIGEETSSL.

2 consecutive transmembrane segments (helical) span residues 42–62 (PFPL…VLLA) and 65–85 (TGTL…FICA).

The protein localises to the membrane. This is an uncharacterized protein from Saccharomyces cerevisiae (strain ATCC 204508 / S288c) (Baker's yeast).